The sequence spans 277 residues: Phosphatidylglycerol--prolipoprotein diacylglyceryl transferase (277 aa).

Helical transmembrane passes span Ile15–Ser35, Ile50–Ile70, Gly89–Tyr109, and Phe112–Leu132. Arg134 serves as a coordination point for a 1,2-diacyl-sn-glycero-3-phospho-(1'-sn-glycerol). The next 3 membrane-spanning stretches (helical) occupy residues Lys174–Leu194, Gly204–Met224, and Val234–Val254.

It belongs to the Lgt family.

It localises to the cell membrane. It carries out the reaction L-cysteinyl-[prolipoprotein] + a 1,2-diacyl-sn-glycero-3-phospho-(1'-sn-glycerol) = an S-1,2-diacyl-sn-glyceryl-L-cysteinyl-[prolipoprotein] + sn-glycerol 1-phosphate + H(+). The protein operates within protein modification; lipoprotein biosynthesis (diacylglyceryl transfer). Functionally, catalyzes the transfer of the diacylglyceryl group from phosphatidylglycerol to the sulfhydryl group of the N-terminal cysteine of a prolipoprotein, the first step in the formation of mature lipoproteins. The protein is Phosphatidylglycerol--prolipoprotein diacylglyceryl transferase of Lactobacillus delbrueckii subsp. bulgaricus (strain ATCC 11842 / DSM 20081 / BCRC 10696 / JCM 1002 / NBRC 13953 / NCIMB 11778 / NCTC 12712 / WDCM 00102 / Lb 14).